The chain runs to 217 residues: MEAENEAHCCPGSSSGGSREYKVVMLGAGGVGKSAVTMQFISHQFPDYHDPTIEDAYKTQVRIDNEPAYLDILDTAGQAEFTAMREQYMRGGEGFIICYSVTDRQSFQEAAKFKELIFQVRHTYEIPLVLVGNKIDLEQFRQVSTEEGMTLARDYNCAFFETSAALRFGIDDAFQGLVREIRRKESMLSLVERKLKRKDSLWKKIKASLKKKRENMI.

GTP-binding positions include 27–34 (GAGGVGKS), 74–78 (DTAGQ), and 133–136 (NKID).

This sequence belongs to the small GTPase superfamily. Ras family. In terms of assembly, interacts with AFDN, the C-terminal domain of RALGDS and RLF, but not with RIN1 and PIK3CA. RLF binds exclusively to the active GTP-bound form. Binds calmodulin. Interacts with PLXNB3.

The protein localises to the nucleus. It is found in the cell membrane. It carries out the reaction GTP + H2O = GDP + phosphate + H(+). With respect to regulation, alternates between an inactive form bound to GDP and an active form bound to GTP. Functionally, binds and exchanges GTP and GDP. In Rattus norvegicus (Rat), this protein is GTP-binding protein Rit2 (Rit2).